Consider the following 126-residue polypeptide: UPF0538 protein C2orf76 (126 aa).

Belongs to the UPF0538 family.

The polypeptide is UPF0538 protein C2orf76 (C2orf76) (Homo sapiens (Human)).